Consider the following 309-residue polypeptide: Elongation factor Ts (309 aa).

The segment at 82 to 85 is involved in Mg(2+) ion dislocation from EF-Tu; that stretch reads TDFV.

Belongs to the EF-Ts family.

The protein resides in the cytoplasm. Associates with the EF-Tu.GDP complex and induces the exchange of GDP to GTP. It remains bound to the aminoacyl-tRNA.EF-Tu.GTP complex up to the GTP hydrolysis stage on the ribosome. The protein is Elongation factor Ts of Rickettsia akari (strain Hartford).